A 305-amino-acid polypeptide reads, in one-letter code: tRNA pseudouridine synthase B (305 aa).

D48 (nucleophile) is an active-site residue.

Belongs to the pseudouridine synthase TruB family. Type 1 subfamily.

The catalysed reaction is uridine(55) in tRNA = pseudouridine(55) in tRNA. In terms of biological role, responsible for synthesis of pseudouridine from uracil-55 in the psi GC loop of transfer RNAs. The polypeptide is tRNA pseudouridine synthase B (Stutzerimonas stutzeri (strain A1501) (Pseudomonas stutzeri)).